The sequence spans 173 residues: Glycine cleavage system H protein, mitochondrial (173 aa).

The transit peptide at 1 to 48 (MALRAVRSVRAAVGGLRAISAPSAPCLPRPWGLRAGAVRELRTGPALL) directs the protein to the mitochondrion. One can recognise a Lipoyl-binding domain in the interval 66-148 (VGTVGISNFA…YEDGWLIKMT (83 aa)). An N6-lipoyllysine modification is found at Lys107.

Belongs to the GcvH family. Interacts with GLDC. The glycine cleavage system is composed of four proteins: P (GLDC), T (GCST), L (DLD) and H (GCSH). (R)-lipoate is required as a cofactor.

The protein localises to the mitochondrion. Functionally, the glycine cleavage system catalyzes the degradation of glycine. The H protein (GCSH) shuttles the methylamine group of glycine from the P protein (GLDC) to the T protein (GCST). Has a pivotal role in the lipoylation of enzymes involved in cellular energetics such as the mitochondrial dihydrolipoyllysine-residue acetyltransferase component of pyruvate dehydrogenase complex (DLAT), and the mitochondrial dihydrolipoyllysine-residue succinyltransferase component of 2-oxoglutarate dehydrogenase complex (DLST). The sequence is that of Glycine cleavage system H protein, mitochondrial from Bos taurus (Bovine).